We begin with the raw amino-acid sequence, 92 residues long: CRISPR-associated endoribonuclease Cas2 1 (92 aa).

Asp-10 is a binding site for Mg(2+).

The protein belongs to the CRISPR-associated endoribonuclease Cas2 protein family. Homodimer, forms a heterotetramer with a Cas1 homodimer. It depends on Mg(2+) as a cofactor.

Functionally, CRISPR (clustered regularly interspaced short palindromic repeat), is an adaptive immune system that provides protection against mobile genetic elements (viruses, transposable elements and conjugative plasmids). CRISPR clusters contain sequences complementary to antecedent mobile elements and target invading nucleic acids. CRISPR clusters are transcribed and processed into CRISPR RNA (crRNA). Functions as a ssRNA-specific endoribonuclease. Involved in the integration of spacer DNA into the CRISPR cassette. This Thermodesulfovibrio yellowstonii (strain ATCC 51303 / DSM 11347 / YP87) protein is CRISPR-associated endoribonuclease Cas2 1.